The following is a 545-amino-acid chain: Germacrene D synthase 1 (545 aa).

Mg(2+) is bound by residues Asp298, Asp302, Asn443, and Glu451. The short motif at 298 to 302 (DDTFD) is the DDXXD motif element.

Belongs to the terpene synthase family. The cofactor is Mg(2+).

Its subcellular location is the cytoplasm. The protein localises to the cytosol. The enzyme catalyses (2E,6E)-farnesyl diphosphate = (-)-germacrene D + diphosphate. Its pathway is secondary metabolite biosynthesis; terpenoid biosynthesis. Its function is as follows. Sesquiterpene synthase involved in germacrene D biosynthesis. Also produces at least 13 additional sesquiterpene products, including germacrene C and (+)-germacrene A, beta-ylangene, (E)-beta-farnesene and (E,E)-alpha-farnesene. The protein is Germacrene D synthase 1 of Pogostemon cablin (Patchouli).